The following is a 514-amino-acid chain: Putative thymidine phosphorylase (514 aa).

This sequence belongs to the thymidine/pyrimidine-nucleoside phosphorylase family. Type 2 subfamily.

It catalyses the reaction thymidine + phosphate = 2-deoxy-alpha-D-ribose 1-phosphate + thymine. The protein is Putative thymidine phosphorylase of Rhodopseudomonas palustris (strain ATCC BAA-98 / CGA009).